The sequence spans 337 residues: TSGKVSIKWFEDGVLNVTESCLDRHLATRGDQVAIIWEGDDPNADSKVTYRELHARVCQLANAMRGMGVQKGDRVCIYLPMIEEAAVAMLACARIGAVHSIVFGGFSPDSLSSRIQDSDCVLLITADEGRRGGRKVPLKVNADEALKTCPSIRHVIVAKNTGGNVAMQEGRDHWWADACDNQPKTSTPEPMGAEDPLFILYTSGSTGKPKGVLHTTGGYLVWASFTHQNVFDYRDGEIYWCTADVGWVTGHTYIVYGPLANGATTLMFEGVPNYPTVSRFWEVIDKHQVNIFYTAPTAIRALMRDGEAPVKKTSRKSLRILGSVGEPINPEAWLWYY.

Residues 131–134 (RGGR), threonine 249, and asparagine 273 each bind CoA. ATP is bound at residue 325–327 (GEP).

The protein belongs to the ATP-dependent AMP-binding enzyme family. Mg(2+) serves as cofactor. Acetylated. Deacetylation by the SIR2-homolog deacetylase activates the enzyme.

It catalyses the reaction acetate + ATP + CoA = acetyl-CoA + AMP + diphosphate. In terms of biological role, catalyzes the conversion of acetate into acetyl-CoA (AcCoA), an essential intermediate at the junction of anabolic and catabolic pathways. AcsA undergoes a two-step reaction. In the first half reaction, AcsA combines acetate with ATP to form acetyl-adenylate (AcAMP) intermediate. In the second half reaction, it can then transfer the acetyl group from AcAMP to the sulfhydryl group of CoA, forming the product AcCoA. The polypeptide is Acetyl-coenzyme A synthetase (acsA) (Nostoc linckia).